A 435-amino-acid polypeptide reads, in one-letter code: ATP-dependent protease ATPase subunit HslU (435 aa).

Residues Val-18, 60-65 (GCGKTE), Asp-248, Glu-313, and Arg-385 contribute to the ATP site.

Belongs to the ClpX chaperone family. HslU subfamily. As to quaternary structure, a double ring-shaped homohexamer of HslV is capped on each side by a ring-shaped HslU homohexamer. The assembly of the HslU/HslV complex is dependent on binding of ATP.

It localises to the cytoplasm. Its function is as follows. ATPase subunit of a proteasome-like degradation complex; this subunit has chaperone activity. The binding of ATP and its subsequent hydrolysis by HslU are essential for unfolding of protein substrates subsequently hydrolyzed by HslV. HslU recognizes the N-terminal part of its protein substrates and unfolds these before they are guided to HslV for hydrolysis. This Beijerinckia indica subsp. indica (strain ATCC 9039 / DSM 1715 / NCIMB 8712) protein is ATP-dependent protease ATPase subunit HslU.